We begin with the raw amino-acid sequence, 1480 residues long: Tubulin-specific chaperone D (1480 aa).

2 disordered regions span residues 1–32 and 453–476; these read MENS…SQQQ and NNNN…EEIP. 2 stretches are compositionally biased toward low complexity: residues 7–32 and 453–463; these read ISLN…SQQQ and NNNNNNNNNEN. Over residues 464 to 476 the composition is skewed to acidic residues; it reads NNEEGEEEEEEIP. An HEAT 1 repeat occupies 482–520; it reads ILEEIMKSLKDKDTIIRWTSAKAIGRIVNLLPKDMGDQV. The segment at 859–880 is disordered; it reads KPIITPPSSKSTTNNNNNNNNN. One copy of the HEAT 2 repeat lies at 886–922; the sequence is EIAFNIILGYLNENLNHPNEEVQKEASKAFELLFSKY. The segment at 1437–1480 is disordered; that stretch reads NPHKQSDDNNNNNNGELINNNTENNNNNNFDDNLPEDSQDLMEI. Low complexity predominate over residues 1444–1468; it reads DNNNNNNGELINNNTENNNNNNFDD. Residues 1469–1480 are compositionally biased toward acidic residues; sequence NLPEDSQDLMEI.

Belongs to the TBCD family. Supercomplex made of cofactors A to E. Cofactors A and D function by capturing and stabilizing tubulin in a quasi-native conformation. Cofactor E binds to the cofactor D-tubulin complex; interaction with cofactor C then causes the release of tubulin polypeptides that are committed to the native state.

Tubulin-folding protein; involved in the first step of the tubulin folding pathway. The sequence is that of Tubulin-specific chaperone D (tbcd) from Dictyostelium discoideum (Social amoeba).